Consider the following 283-residue polypeptide: Shikimate kinase (283 aa).

Proline 86–alanine 96 contributes to the ATP binding site.

This sequence belongs to the GHMP kinase family. Archaeal shikimate kinase subfamily.

It localises to the cytoplasm. It catalyses the reaction shikimate + ATP = 3-phosphoshikimate + ADP + H(+). Its pathway is metabolic intermediate biosynthesis; chorismate biosynthesis; chorismate from D-erythrose 4-phosphate and phosphoenolpyruvate: step 5/7. This chain is Shikimate kinase, found in Methanococcus vannielii (strain ATCC 35089 / DSM 1224 / JCM 13029 / OCM 148 / SB).